The following is a 401-amino-acid chain: Enoyl-[acyl-carrier-protein] reductase [NADH] (401 aa).

NAD(+) contacts are provided by residues glycine 48 to tyrosine 53, phenylalanine 74 to glutamate 75, aspartate 111 to alanine 112, and leucine 140 to alanine 141. Tyrosine 226 lines the substrate pocket. Tyrosine 236 (proton donor) is an active-site residue. NAD(+) is bound by residues lysine 245 and valine 274–threonine 276.

This sequence belongs to the TER reductase family. As to quaternary structure, monomer.

The enzyme catalyses a 2,3-saturated acyl-[ACP] + NAD(+) = a (2E)-enoyl-[ACP] + NADH + H(+). The protein operates within lipid metabolism; fatty acid biosynthesis. Functionally, involved in the final reduction of the elongation cycle of fatty acid synthesis (FAS II). Catalyzes the reduction of a carbon-carbon double bond in an enoyl moiety that is covalently linked to an acyl carrier protein (ACP). The protein is Enoyl-[acyl-carrier-protein] reductase [NADH] of Xylella fastidiosa (strain 9a5c).